Here is a 250-residue protein sequence, read N- to C-terminus: ATP synthase subunit b 2 (250 aa).

The helical transmembrane segment at 2–22 threads the bilayer; sequence LIDWFTVFAQILNFVILLGLL.

It belongs to the ATPase B chain family. F-type ATPases have 2 components, F(1) - the catalytic core - and F(0) - the membrane proton channel. F(1) has five subunits: alpha(3), beta(3), gamma(1), delta(1), epsilon(1). F(0) has four main subunits: a(1), b(1), b'(1) and c(10-14). The alpha and beta chains form an alternating ring which encloses part of the gamma chain. F(1) is attached to F(0) by a central stalk formed by the gamma and epsilon chains, while a peripheral stalk is formed by the delta, b and b' chains.

It is found in the cellular thylakoid membrane. Functionally, f(1)F(0) ATP synthase produces ATP from ADP in the presence of a proton or sodium gradient. F-type ATPases consist of two structural domains, F(1) containing the extramembraneous catalytic core and F(0) containing the membrane proton channel, linked together by a central stalk and a peripheral stalk. During catalysis, ATP synthesis in the catalytic domain of F(1) is coupled via a rotary mechanism of the central stalk subunits to proton translocation. In terms of biological role, component of the F(0) channel, it forms part of the peripheral stalk, linking F(1) to F(0). The sequence is that of ATP synthase subunit b 2 from Picosynechococcus sp. (strain ATCC 27264 / PCC 7002 / PR-6) (Agmenellum quadruplicatum).